Consider the following 103-residue polypeptide: MADSYTELEKAVVVLVENFYKYVSKHSLVKNKISKSSFRKMLQKELNHMLTDTGNRKAADKLIQNLDANHDGRISFDEYWTLIGGITSPIANLIRQQEQQSSS.

The region spanning 12–47 (VVVLVENFYKYVSKHSLVKNKISKSSFRKMLQKELN) is the EF-hand 1; degenerate domain. The region spanning 54–89 (GNRKAADKLIQNLDANHDGRISFDEYWTLIGGITSP) is the EF-hand 2 domain. Asp67, Asn69, Asp71, Arg73, and Glu78 together coordinate Ca(2+).

This sequence belongs to the S-100 family. Homodimer. Interacts with TP53.

The protein localises to the nucleus. It is found in the nucleolus. Its subcellular location is the cytoplasm. Its function is as follows. Calcium-binding protein. Binds one calcium ion per monomer. Can promote differentiation of adipocytes (in vitro). Overexpression in preadipocytes increases their proliferation, enhances adipogenesis and reduces insulin-stimulated glucose uptake. This Bos taurus (Bovine) protein is Protein S100-A16 (S100A16).